A 459-amino-acid polypeptide reads, in one-letter code: MSIGKITQIIGAVIDVEFSADNMPKIYDALKVLETGLTLEVQQQLGDHIVRAIAMGGSEGLKRGLGVTNTGEPIKVPVGVKTLGRIMNVLGEPIDNAGEIGQEVDWTIHRSAPDYDELAPTTELLETGIKVIDLICPFAKGGKVGLFGGAGVGKTVNMMELIRNIAIAHSGYSVFAGVGERTREGNDFYHEMKESNVLNKVSLVYGQMNEPPGNRLRVALTGLTMAEYFRDEGRDVLLFIDNIYRYTLAGTEVSALLGRMPSAVGYQPTLASEMGALQERITSTKKGSITSIQAVYVPADDLTDPSPATTFAHLDATVVLSRQVAELGIYPAVDPLDSTSRQLDPLIVGEEHYNVARGVQGVLQRYKELKDIIAILGMDELSEEDKRSVSRARKVQRFLSQPFFVAEVFTGAPGKYVSLKDTIAGFKAILDGEMDDFPEQVFYMTGSIDEVRGRSKEKA.

Position 148–155 (148–155 (GGAGVGKT)) interacts with ATP.

The protein belongs to the ATPase alpha/beta chains family. F-type ATPases have 2 components, CF(1) - the catalytic core - and CF(0) - the membrane proton channel. CF(1) has five subunits: alpha(3), beta(3), gamma(1), delta(1), epsilon(1). CF(0) has three main subunits: a(1), b(2) and c(9-12). The alpha and beta chains form an alternating ring which encloses part of the gamma chain. CF(1) is attached to CF(0) by a central stalk formed by the gamma and epsilon chains, while a peripheral stalk is formed by the delta and b chains.

Its subcellular location is the cell inner membrane. The enzyme catalyses ATP + H2O + 4 H(+)(in) = ADP + phosphate + 5 H(+)(out). In terms of biological role, produces ATP from ADP in the presence of a proton gradient across the membrane. The catalytic sites are hosted primarily by the beta subunits. The chain is ATP synthase subunit beta from Vesicomyosocius okutanii subsp. Calyptogena okutanii (strain HA).